The primary structure comprises 256 residues: Small ribosomal subunit protein uS2 (256 aa).

This sequence belongs to the universal ribosomal protein uS2 family.

This Geotalea uraniireducens (strain Rf4) (Geobacter uraniireducens) protein is Small ribosomal subunit protein uS2.